The primary structure comprises 29 residues: Protein Tat (29 aa).

Residues 1 to 29 are disordered; sequence PSSQPRGDPTGQEEPKKKVEKKTTTDPFD. Positions 6 to 8 match the Cell attachment site motif; the sequence is RGD. Basic and acidic residues predominate over residues 13–29; sequence EEPKKKVEKKTTTDPFD.

The protein belongs to the lentiviruses Tat family. In terms of assembly, interacts with host CCNT1. Associates with the P-TEFb complex composed at least of Tat, P-TEFb (CDK9 and CCNT1), TAR RNA, RNA Pol II. Recruits the HATs CREBBP, TAF1/TFIID, EP300, PCAF and GCN5L2. Interacts with host KAT5/Tip60; this interaction targets the latter to degradation. Interacts with the host deacetylase SIRT1. Interacts with host capping enzyme RNGTT; this interaction stimulates RNGTT. Binds to host KDR, and to the host integrins ITGAV/ITGB3 and ITGA5/ITGB1. Interacts with host KPNB1/importin beta-1 without previous binding to KPNA1/importin alpha-1. Interacts with EIF2AK2. Interacts with host nucleosome assembly protein NAP1L1; this interaction may be required for the transport of Tat within the nucleus, since the two proteins interact at the nuclear rim. Interacts with host C1QBP/SF2P32; this interaction involves lysine-acetylated Tat. Interacts with the host chemokine receptors CCR2, CCR3 and CXCR4. Interacts with host DPP4/CD26; this interaction may trigger an anti-proliferative effect. Interacts with host LDLR. Interacts with the host extracellular matrix metalloproteinase MMP1. Interacts with host PRMT6; this interaction mediates Tat's methylation. Interacts with, and is ubiquitinated by MDM2/Hdm2. Interacts with host PSMC3 and HTATIP2. Interacts with STAB1; this interaction may overcome SATB1-mediated repression of IL2 and IL2RA (interleukin) in T cells by binding to the same domain than HDAC1. Interacts (when acetylated) with human CDK13, thereby increasing HIV-1 mRNA splicing and promoting the production of the doubly spliced HIV-1 protein Nef. In terms of processing, acetylation by EP300, CREBBP, GCN5L2/GCN5 and PCAF regulates the transactivation activity of Tat. Phosphorylated by EIF2AK2 on serine and threonine residues adjacent to the basic region important for TAR RNA binding and function. Phosphorylation of Tat by EIF2AK2 is dependent on the prior activation of EIF2AK2 by dsRNA. Post-translationally, asymmetrical arginine methylation by host PRMT6 seems to diminish the transactivation capacity of Tat and affects the interaction with host CCNT1. In terms of processing, polyubiquitination by MDM2 does not target Tat to degradation, but activates its transactivation function and fosters interaction with CCNT1 and TAR RNA.

It localises to the host nucleus. The protein resides in the host nucleolus. The protein localises to the host cytoplasm. Its subcellular location is the secreted. Functionally, transcriptional activator that increases RNA Pol II processivity, thereby increasing the level of full-length viral transcripts. Recognizes a hairpin structure at the 5'-LTR of the nascent viral mRNAs referred to as the transactivation responsive RNA element (TAR) and recruits the cyclin T1-CDK9 complex (P-TEFb complex) that will in turn hyperphosphorylate the RNA polymerase II to allow efficient elongation. The CDK9 component of P-TEFb and other Tat-activated kinases hyperphosphorylate the C-terminus of RNA Pol II that becomes stabilized and much more processive. Other factors such as HTATSF1/Tat-SF1, SUPT5H/SPT5, and HTATIP2 are also important for Tat's function. Besides its effect on RNA Pol II processivity, Tat induces chromatin remodeling of proviral genes by recruiting the histone acetyltransferases (HATs) CREBBP, EP300 and PCAF to the chromatin. This also contributes to the increase in proviral transcription rate, especially when the provirus integrates in transcriptionally silent region of the host genome. To ensure maximal activation of the LTR, Tat mediates nuclear translocation of NF-kappa-B by interacting with host RELA. Through its interaction with host TBP, Tat may also modulate transcription initiation. Tat can reactivate a latently infected cell by penetrating in it and transactivating its LTR promoter. In the cytoplasm, Tat is thought to act as a translational activator of HIV-1 mRNAs. Its function is as follows. Extracellular circulating Tat can be endocytosed by surrounding uninfected cells via the binding to several surface receptors such as CD26, CXCR4, heparan sulfate proteoglycans (HSPG) or LDLR. Neurons are rarely infected, but they internalize Tat via their LDLR. Endosomal low pH allows Tat to cross the endosome membrane to enter the cytosol and eventually further translocate into the nucleus, thereby inducing severe cell dysfunctions ranging from cell activation to cell death. Through its interaction with nuclear HATs, Tat is potentially able to control the acetylation-dependent cellular gene expression. Tat seems to inhibit the HAT activity of KAT5/Tip60 and TAF1, and consequently modify the expression of specific cellular genes. Modulates the expression of many cellular genes involved in cell survival, proliferation or in coding for cytokines (such as IL10) or cytokine receptors. May be involved in the derepression of host interleukin IL2 expression. Mediates the activation of cyclin-dependent kinases and dysregulation of microtubule network. Tat plays a role in T-cell and neurons apoptosis. Tat induced neurotoxicity and apoptosis probably contribute to neuroAIDS. Host extracellular matrix metalloproteinase MMP1 cleaves Tat and decreases Tat's mediated neurotoxicity. Circulating Tat also acts as a chemokine-like and/or growth factor-like molecule that binds to specific receptors on the surface of the cells, affecting many cellular pathways. In the vascular system, Tat binds to ITGAV/ITGB3 and ITGA5/ITGB1 integrins dimers at the surface of endothelial cells and competes with bFGF for heparin-binding sites, leading to an excess of soluble bFGF. Binds to KDR/VEGFR-2. All these Tat-mediated effects enhance angiogenesis in Kaposi's sarcoma lesions. The polypeptide is Protein Tat (Homo sapiens (Human)).